The following is a 388-amino-acid chain: Lipid-A-disaccharide synthase (388 aa).

Belongs to the LpxB family.

It carries out the reaction a lipid X + a UDP-2-N,3-O-bis[(3R)-3-hydroxyacyl]-alpha-D-glucosamine = a lipid A disaccharide + UDP + H(+). The protein operates within bacterial outer membrane biogenesis; LPS lipid A biosynthesis. Functionally, condensation of UDP-2,3-diacylglucosamine and 2,3-diacylglucosamine-1-phosphate to form lipid A disaccharide, a precursor of lipid A, a phosphorylated glycolipid that anchors the lipopolysaccharide to the outer membrane of the cell. The polypeptide is Lipid-A-disaccharide synthase (Burkholderia pseudomallei (strain K96243)).